A 294-amino-acid polypeptide reads, in one-letter code: 4-hydroxy-tetrahydrodipicolinate synthase (294 aa).

Pyruvate is bound at residue Thr-44. Catalysis depends on Tyr-132, which acts as the Proton donor/acceptor. Lys-161 (schiff-base intermediate with substrate) is an active-site residue. Pyruvate is bound at residue Ile-203.

Belongs to the DapA family. Homotetramer; dimer of dimers.

It is found in the cytoplasm. The enzyme catalyses L-aspartate 4-semialdehyde + pyruvate = (2S,4S)-4-hydroxy-2,3,4,5-tetrahydrodipicolinate + H2O + H(+). Its pathway is amino-acid biosynthesis; L-lysine biosynthesis via DAP pathway; (S)-tetrahydrodipicolinate from L-aspartate: step 3/4. Functionally, catalyzes the condensation of (S)-aspartate-beta-semialdehyde [(S)-ASA] and pyruvate to 4-hydroxy-tetrahydrodipicolinate (HTPA). This Aquifex aeolicus (strain VF5) protein is 4-hydroxy-tetrahydrodipicolinate synthase.